We begin with the raw amino-acid sequence, 713 residues long: Calpastatin (713 aa).

Disordered stretches follow at residues 1-187 (MNPT…LDPM) and 211-506 (DKKE…PVLP). Residues 21 to 30 (PNKKRHKKQA) show a composition bias toward basic residues. Lys-32 participates in a covalent cross-link: Glycyl lysine isopeptide (Lys-Gly) (interchain with G-Cter in SUMO2). Residues 46 to 63 (VVHEKKTQEVKPKEHPEP) show a composition bias toward basic and acidic residues. An N6-acetyllysine modification is found at Lys-50. Residues 85 to 94 (SRSNEQPTSE) are compositionally biased toward polar residues. A phosphoserine mark is found at Ser-87 and Ser-134. Residue Thr-136 is modified to Phosphothreonine. One copy of the Inhibitory domain 1 repeat lies at 171 to 223 (TEEDNTTYTGPEVLDPMSSTYIEELGKREVTLPPKYRELLDKKEGIPVPPPDT). Ser-244 is subject to Phosphoserine. 3 stretches are compositionally biased toward basic and acidic residues: residues 248–258 (DGKKTEKEKST), 304–332 (RKSEPELDLSSIKEIDEAKAKEEKLKKCG), and 342–367 (YRLKPAMDKDGKPLLPEAEEKPKPLS). The stretch at 307-359 (EPELDLSSIKEIDEAKAKEEKLKKCGEDDETVPPEYRLKPAMDKDGKPLLPEA) is one Inhibitory domain 2 repeat. 3 positions are modified to phosphoserine: Ser-367, Ser-369, and Ser-376. Over residues 370-379 (ELIDELSEDF) the composition is skewed to acidic residues. Residues 380 to 397 (DQSKRKEKQSKPTEKTKE) show a composition bias toward basic and acidic residues. Residue Ser-441 is modified to Phosphoserine. Positions 443–502 (GKKEADPEDGKPVEDKVKEKAKEEDREKLGEKEETIPPDYRLEEVKDKDGKTLPHKDPKE) are enriched in basic and acidic residues. One copy of the Inhibitory domain 3 repeat lies at 447-500 (ADPEDGKPVEDKVKEKAKEEDREKLGEKEETIPPDYRLEEVKDKDGKTLPHKDP). A phosphoserine mark is found at Ser-517 and Ser-528. The segment at 536–713 (SAAVSEVVSQ…KQKSDGKSTS (178 aa)) is disordered. A compositionally biased stretch (polar residues) spans 542–553 (VVSQTSAPTTHS). A phosphoserine mark is found at Ser-575 and Ser-577. One copy of the Inhibitory domain 4 repeat lies at 583–636 (PDPDENKPIEDKVKEKAEAEHRDKLGERDDTIPPEYRHLLDKDEEGKSTKPPTK). Composition is skewed to basic and acidic residues over residues 583–646 (PDPD…KPEA) and 691–713 (KAKDSTKAKEETSKQKSDGKSTS).

Belongs to the protease inhibitor I27 (calpastatin) family.

In terms of biological role, specific inhibition of calpain (calcium-dependent cysteine protease). Plays a key role in postmortem tenderization of meat and have been proposed to be involved in muscle protein degradation in living tissue. This is Calpastatin (CAST) from Sus scrofa (Pig).